The primary structure comprises 417 residues: MSSISGFLGAIPGAQQILQTMAGSLGLAPLSHPEIASSGSTFQQCGKLELSCQTSYHGQDTCCFNYPGGQMLQTQFWDADPAVGPENSWTIHGLWPDHCNGGFDQFCDSHRKYSNISLILIDAGRRDLLDEMSTYWKDYRGDDPNLWEHEWNKHGTCVSTLETHCYSEYYPQQEVVDYFDKTVELFHDLPTYMTLANAGIVPSYTQTYTRHEVEDALSKAHGATVTVRCRSQRLQEVWYFFNVEGPLQTGKFVPSEPDGQTSNCPAKGIIYQPKTPNKDPGHGHEPTKTRHPHGPTGAPFIGKGNLVVSTMGQQRGCIIGRGTWYSSGTCADFRAKRASGDTFTLSSRKGPCAFKDDIFTCGSYISSPAEFSAEDGKLSYHGNTTFFADKAPKGKVQSDIFVSEADHPIELSIAWRG.

The signal sequence occupies residues 1–22; sequence MSSISGFLGAIPGAQQILQTMA. 5 cysteine pairs are disulfide-bonded: Cys-45–Cys-63, Cys-52–Cys-99, Cys-62–Cys-165, Cys-107–Cys-157, and Cys-229–Cys-264. Residue His-92 is part of the active site. The N-linked (GlcNAc...) asparagine glycan is linked to Asn-115. Catalysis depends on residues Glu-150 and His-154. Residues 274–296 are disordered; it reads KTPNKDPGHGHEPTKTRHPHGPT. Positions 276–288 are enriched in basic and acidic residues; sequence PNKDPGHGHEPTK. Asn-383 is a glycosylation site (N-linked (GlcNAc...) asparagine).

This sequence belongs to the RNase T2 family.

The protein localises to the vacuole lumen. The protein resides in the cytoplasm. It catalyses the reaction a ribonucleotidyl-ribonucleotide-RNA + H2O = a 3'-end 3'-phospho-ribonucleotide-RNA + a 5'-end dephospho-ribonucleoside-RNA + H(+). Rnase which modulates cell survival under stress conditions. Released from the vacuole to the cytoplasm during stress to promote tRNA and rRNA cleavage and to activate separately a downstream pathway that promotes cell death. Involved in cell size, vacuolar morphology and growth at high temperatures and high salt concentration. This Emericella nidulans (strain FGSC A4 / ATCC 38163 / CBS 112.46 / NRRL 194 / M139) (Aspergillus nidulans) protein is Ribonuclease T2-like (rny1).